The chain runs to 430 residues: Serine--tRNA ligase (430 aa).

237 to 239 (TAE) is an L-serine binding site. Residue 268 to 270 (RAE) coordinates ATP. L-serine is bound at residue glutamate 291. 355–358 (EISS) is a binding site for ATP. Residue serine 391 coordinates L-serine.

Belongs to the class-II aminoacyl-tRNA synthetase family. Type-1 seryl-tRNA synthetase subfamily. As to quaternary structure, homodimer. The tRNA molecule binds across the dimer.

Its subcellular location is the cytoplasm. The catalysed reaction is tRNA(Ser) + L-serine + ATP = L-seryl-tRNA(Ser) + AMP + diphosphate + H(+). The enzyme catalyses tRNA(Sec) + L-serine + ATP = L-seryl-tRNA(Sec) + AMP + diphosphate + H(+). It functions in the pathway aminoacyl-tRNA biosynthesis; selenocysteinyl-tRNA(Sec) biosynthesis; L-seryl-tRNA(Sec) from L-serine and tRNA(Sec): step 1/1. Catalyzes the attachment of serine to tRNA(Ser). Is also able to aminoacylate tRNA(Sec) with serine, to form the misacylated tRNA L-seryl-tRNA(Sec), which will be further converted into selenocysteinyl-tRNA(Sec). In Serratia proteamaculans (strain 568), this protein is Serine--tRNA ligase.